Reading from the N-terminus, the 371-residue chain is 4-hydroxy-3-methylbut-2-en-1-yl diphosphate synthase (flavodoxin) (371 aa).

[4Fe-4S] cluster contacts are provided by Cys-270, Cys-273, Cys-305, and Glu-312.

The protein belongs to the IspG family. It depends on [4Fe-4S] cluster as a cofactor.

It carries out the reaction (2E)-4-hydroxy-3-methylbut-2-enyl diphosphate + oxidized [flavodoxin] + H2O + 2 H(+) = 2-C-methyl-D-erythritol 2,4-cyclic diphosphate + reduced [flavodoxin]. It functions in the pathway isoprenoid biosynthesis; isopentenyl diphosphate biosynthesis via DXP pathway; isopentenyl diphosphate from 1-deoxy-D-xylulose 5-phosphate: step 5/6. Converts 2C-methyl-D-erythritol 2,4-cyclodiphosphate (ME-2,4cPP) into 1-hydroxy-2-methyl-2-(E)-butenyl 4-diphosphate. The sequence is that of 4-hydroxy-3-methylbut-2-en-1-yl diphosphate synthase (flavodoxin) from Shewanella woodyi (strain ATCC 51908 / MS32).